Consider the following 24-residue polypeptide: Citropin-3.1.2 (24 aa).

Expressed by the dorsal and submental skin glands.

It localises to the secreted. This chain is Citropin-3.1.2, found in Ranoidea citropa (Australian Blue Mountains tree frog).